Here is a 671-residue protein sequence, read N- to C-terminus: MIDFDDVAAINPELLQLLPLHPKDNLPLQENVTIQKQKRRSVNSKIPAPKESLRTRSTRMSTVSELRVTAQENDMEVELPAAANTRKQFSVPPTHPRPSCPAVAEIPSRMVSEEVEEQVHSIRGSSSANPVNSVRRKSCIVKEVEKMKNKREEKKAQNSEMRMKRAQEYDSSFPNWEFARMIKEFRATLECHPLTMTDPIEEHRICVCVRKRPLNKQELAKKEIDVISIPSKCLLLVHEPKLKVDLTKYLENQAFCFDFAFDETASNEVVYRFTARPLVQTIFEGGKATCFAYGQTGSGKTHTMGGDLSGKAQNASKGIYAMASRDVFLLKNQPCYRKLGLEVYVTFFEIYNGKLFDLLNKKAKLRVLEDGKQQVQVVGLQEHLVNSADDVIKMIDMGSACRTSGQTFANSNSSRSHACFQILLRAKGRMHGKFSLVDLAGNERGADTSSADRQTRMEGAEINKSLLALKECIRALGQNKAHTPFRESKLTQVLRDSFIGENSRTCMIATISPGISSCEYTLNTLRYADRVKELSPHSGPSGEQLIQMETEEMEACSNGALIPGNLSKEEEELSSQMSSFNEAMTQIRELEERAVEELKEIIQQGPDWLELSEMTEQPDYDLETFVNKAEFALAQQAKHFSALRDVIKALRLAMQLEEQASRQISSKKRPQ.

The tract at residues 1–200 (MIDFDDVAAI…CHPLTMTDPI (200 aa)) is globular. Residues 36–62 (KQKRRSVNSKIPAPKESLRTRSTRMST) are disordered. S41 is subject to Phosphoserine; by AURKB. A Microtubule tip localization signal motif is present at residues 44-47 (SKIP). S52, S57, S61, S112, S121, S133, and S138 each carry phosphoserine. The negative regulator of microtubule-binding stretch occupies residues 153–184 (EKKAQNSEMRMKRAQEYDSSFPNWEFARMIKE). Cystine bridges form between C191–C233 and C290–C506. Residues 204 to 534 (RICVCVRKRP…LRYADRVKEL (331 aa)) form the Kinesin motor domain. Residue 294–301 (GQTGSGKT) participates in ATP binding. Residues S465, S567, and S579 each carry the phosphoserine modification. Positions 564–604 (GNLSKEEEELSSQMSSFNEAMTQIRELEERAVEELKEIIQQ) form a coiled coil.

Belongs to the TRAFAC class myosin-kinesin ATPase superfamily. Kinesin family. MCAK/KIF2 subfamily. In terms of assembly, interacts with CENPH. Interacts with MTUS2/TIP150; the interaction is direct. Interacts with MAPRE1; the interaction is direct, regulated by phosphorylation and is probably required for targeting to growing microtubule plus ends. Interacts with KIF18B at microtubule tips; this interaction increases the affinity of both partners for microtubule plus ends and is required for robust microtubule depolymerization. Phosphorylation by AURKA or AURKB strongly reduces KIF18B-binding. Phosphorylation by AURKB, regulates association with centromeres and kinetochores and the microtubule depolymerization activity. Post-translationally, ubiquitinated.

It is found in the cytoplasm. Its subcellular location is the cytoskeleton. It localises to the nucleus. The protein localises to the chromosome. The protein resides in the centromere. It is found in the kinetochore. Its function is as follows. In complex with KIF18B, constitutes the major microtubule plus-end depolymerizing activity in mitotic cells. Regulates the turnover of microtubules at the kinetochore and functions in chromosome segregation during mitosis. Plays a role in chromosome congression and is required for the lateral to end-on conversion of the chromosome-microtubule attachment. This Macaca fascicularis (Crab-eating macaque) protein is Kinesin-like protein KIF2C (KIF2C).